The following is a 313-amino-acid chain: MSHSVLKVPPSVIERMQSHYGPDITSLSVQGAVFQAKPQGCTITAYRSGKVLFQGKNAEKEAERWTADAETPAPKKPASKKSIPSVYQPPEGIGSMSVIGSDEVGTGDYFGPITVACVYADKAKLPLLKELGVKDSKNLKDPQIVQIARDLIKTVPYSLLVLRNEKYNEMQEKGMSQGKMKALLHNQAIGNLLKKLDGTRPEAILIDQFAEPAVYFKHLAGKTAVKERTYFSTKAEGIHLSVAAASIIARYSFLMEMDKLSKQAGITLPKGAGPLVDEAGAKLIKKHGEDALRVFTKLHFANTQKAKRIASKR.

The interval 62–88 (AERWTADAETPAPKKPASKKSIPSVYQ) is disordered. Residues 96–312 (MSVIGSDEVG…TQKAKRIASK (217 aa)) enclose the RNase H type-2 domain. Asp-102, Glu-103, and Asp-207 together coordinate a divalent metal cation.

Belongs to the RNase HII family. RnhC subfamily. Mn(2+) serves as cofactor. It depends on Mg(2+) as a cofactor.

It is found in the cytoplasm. The enzyme catalyses Endonucleolytic cleavage to 5'-phosphomonoester.. Endonuclease that specifically degrades the RNA of RNA-DNA hybrids. This chain is Ribonuclease HIII, found in Bacillus licheniformis (strain ATCC 14580 / DSM 13 / JCM 2505 / CCUG 7422 / NBRC 12200 / NCIMB 9375 / NCTC 10341 / NRRL NRS-1264 / Gibson 46).